The sequence spans 139 residues: Ribulose bisphosphate carboxylase small subunit (139 aa).

The protein belongs to the RuBisCO small chain family. In terms of assembly, heterohexadecamer of 8 large and 8 small subunits.

Its subcellular location is the plastid. The protein localises to the chloroplast. Functionally, ruBisCO catalyzes two reactions: the carboxylation of D-ribulose 1,5-bisphosphate, the primary event in carbon dioxide fixation, as well as the oxidative fragmentation of the pentose substrate in the photorespiration process. Both reactions occur simultaneously and in competition at the same active site. Although the small subunit is not catalytic it is essential for maximal activity. The polypeptide is Ribulose bisphosphate carboxylase small subunit (Detonula confervacea (Marine diatom)).